A 122-amino-acid polypeptide reads, in one-letter code: Large ribosomal subunit protein uL14 (122 aa).

Belongs to the universal ribosomal protein uL14 family. Part of the 50S ribosomal subunit. Forms a cluster with proteins L3 and L19. In the 70S ribosome, L14 and L19 interact and together make contacts with the 16S rRNA in bridges B5 and B8.

In terms of biological role, binds to 23S rRNA. Forms part of two intersubunit bridges in the 70S ribosome. The chain is Large ribosomal subunit protein uL14 from Francisella philomiragia subsp. philomiragia (strain ATCC 25017 / CCUG 19701 / FSC 153 / O#319-036).